A 23-amino-acid polypeptide reads, in one-letter code: Lycosin-II (23 aa).

Leucine 21 is subject to Leucine amide.

In terms of tissue distribution, expressed by the venom gland.

It is found in the secreted. It localises to the target cell membrane. Functionally, has strong antibacterial activity and biofilm inhibition effects against Gram-positive and -negative bacteria including E.coli, S.epidermidis, and A.baumannii and oxacillin-resistant S.aureus and meropenem-resistant P.aeruginosa. Is not cytotoxic against human foreskin fibroblast Hs27 or hemolytic against mammalian red blood cells. Its mechanism of action involves binding to lipoteichoic acid and lipopolysaccharide of Gram-positive and Gram-negative bacterial membranes, respectively, to destroy the bacterial membrane. In addition, it shows anti-inflammatory effects by inhibiting the expression of pro-inflammatory cytokines that are increased during bacterial infection in Hs27 cells. The chain is Lycosin-II from Lycosa singoriensis (Wolf spider).